The chain runs to 406 residues: Tyrosine--tRNA ligase (406 aa).

Tyrosine 35 serves as a coordination point for L-tyrosine. The short motif at 40-49 (ATSASLHIGH) is the 'HIGH' region element. Residues tyrosine 167 and glutamine 171 each contribute to the L-tyrosine site. The 'KMSKS' region signature appears at 227-231 (KMGKS). Lysine 230 provides a ligand contact to ATP. The S4 RNA-binding domain occupies 341 to 405 (ILLVDLMVLA…IGKKKILRIV (65 aa)).

It belongs to the class-I aminoacyl-tRNA synthetase family. TyrS type 1 subfamily. As to quaternary structure, homodimer.

The protein resides in the cytoplasm. It catalyses the reaction tRNA(Tyr) + L-tyrosine + ATP = L-tyrosyl-tRNA(Tyr) + AMP + diphosphate + H(+). Functionally, catalyzes the attachment of tyrosine to tRNA(Tyr) in a two-step reaction: tyrosine is first activated by ATP to form Tyr-AMP and then transferred to the acceptor end of tRNA(Tyr). The polypeptide is Tyrosine--tRNA ligase (Borrelia recurrentis (strain A1)).